Here is a 504-residue protein sequence, read N- to C-terminus: Protein nucleotidyltransferase YdiU (504 aa).

Residues Gly99, Gly101, Arg102, Lys122, Asp134, Gly135, Arg185, and Arg192 each contribute to the ATP site. Asp261 (proton acceptor) is an active-site residue. Mg(2+) is bound by residues Asn262 and Asp271. Residue Asp271 participates in ATP binding.

This sequence belongs to the SELO family. Mg(2+) is required as a cofactor. The cofactor is Mn(2+).

It carries out the reaction L-seryl-[protein] + ATP = 3-O-(5'-adenylyl)-L-seryl-[protein] + diphosphate. It catalyses the reaction L-threonyl-[protein] + ATP = 3-O-(5'-adenylyl)-L-threonyl-[protein] + diphosphate. The catalysed reaction is L-tyrosyl-[protein] + ATP = O-(5'-adenylyl)-L-tyrosyl-[protein] + diphosphate. The enzyme catalyses L-histidyl-[protein] + UTP = N(tele)-(5'-uridylyl)-L-histidyl-[protein] + diphosphate. It carries out the reaction L-seryl-[protein] + UTP = O-(5'-uridylyl)-L-seryl-[protein] + diphosphate. It catalyses the reaction L-tyrosyl-[protein] + UTP = O-(5'-uridylyl)-L-tyrosyl-[protein] + diphosphate. In terms of biological role, nucleotidyltransferase involved in the post-translational modification of proteins. It can catalyze the addition of adenosine monophosphate (AMP) or uridine monophosphate (UMP) to a protein, resulting in modifications known as AMPylation and UMPylation. This chain is Protein nucleotidyltransferase YdiU, found in Methylococcus capsulatus (strain ATCC 33009 / NCIMB 11132 / Bath).